A 193-amino-acid polypeptide reads, in one-letter code: MEVDLLHFEKKYHNYIVAGIDEAGRGPLAGPVVASAVIIDNANIIHGIKDSKKLSKKKRALLYEQITSNYVWAVAIITHTEIDKINILEATKKACSIAAANLNVKPEIVLVDGNMQFSDERFISIVNGDNLSLSIAAASIIAKVTRDRLMLELSAKFPQYLWHKNSGYGTKEHLEAINKYGLSPYHRKSFKCC.

Positions 15 to 193 (YIVAGIDEAG…PYHRKSFKCC (179 aa)) constitute an RNase H type-2 domain. Asp-21, Glu-22, and Asp-112 together coordinate a divalent metal cation.

It belongs to the RNase HII family. Mn(2+) serves as cofactor. The cofactor is Mg(2+).

It is found in the cytoplasm. It carries out the reaction Endonucleolytic cleavage to 5'-phosphomonoester.. Its function is as follows. Endonuclease that specifically degrades the RNA of RNA-DNA hybrids. This Rickettsia akari (strain Hartford) protein is Ribonuclease HII.